The primary structure comprises 501 residues: MAINAQEISALIKQQIENFKPNFDVTETGVVTYIGDGIARAHGLENVMSGELLNFENGSYGMAQNLESTDVGIIILGDFTDIREGDTIRRTGKIMEVPVGESLIGRVVDPLGRPVDGLGEIHTDKTRPVEAPAPGVMQRKSVSEPLQTGLKAIDALVPIGRGQRELIIGDRQTGKTTIAIDTILNQKDQDMICIYVAIGQKESTVRTQVETLRQYGALDYTIVVTASASQPSPLLFLAPYTGVAMAEEFMYQGKHVLIVYDDLSKQAVAYRELSLLLRRPPGREAFPGDVFYLHSRLLERSAKVSDELGGGSITALPFIETQAGDISAYIATNVISITDGQIFLGDGLFNAGIRPAIDAGSSVSRVGGSAQIKAMKKVAGTLRIDLASYRELEAFTKFGSDLDAATQAKLNRGRRTVEVLKQPVHKPLPVEKQVTILYALTHGFLDTVPVDDIVRFEEEFHTFFDAQHPEILETIRDTKDLPEEAVLDAAITEFLNQSSFQ.

169–176 is an ATP binding site; sequence GDRQTGKT.

It belongs to the ATPase alpha/beta chains family. As to quaternary structure, F-type ATPases have 2 components, CF(1) - the catalytic core - and CF(0) - the membrane proton channel. CF(1) has five subunits: alpha(3), beta(3), gamma(1), delta(1), epsilon(1). CF(0) has three main subunits: a(1), b(2) and c(9-12). The alpha and beta chains form an alternating ring which encloses part of the gamma chain. CF(1) is attached to CF(0) by a central stalk formed by the gamma and epsilon chains, while a peripheral stalk is formed by the delta and b chains.

The protein localises to the cell membrane. It carries out the reaction ATP + H2O + 4 H(+)(in) = ADP + phosphate + 5 H(+)(out). In terms of biological role, produces ATP from ADP in the presence of a proton gradient across the membrane. The alpha chain is a regulatory subunit. The protein is ATP synthase subunit alpha of Streptococcus pneumoniae serotype 19F (strain G54).